We begin with the raw amino-acid sequence, 375 residues long: Platelet-derived growth factor receptor-like protein (375 aa).

Positions 1 to 21 (MKVWLLLGLLLVHEALEDVTG) are cleaved as a signal peptide. Residues 22–64 (QHLPKNKRPKEPGENRIKPTNKKVKPKIPKIKDRDSADSTPKT) form a disordered region. Residues 40 to 50 (PTNKKVKPKIP) show a composition bias toward basic residues. The region spanning 62–159 (PKTQSIMMQV…GYICRKDETK (98 aa)) is the Ig-like C2-type 1 domain. Residues Cys96 and Cys143 are joined by a disulfide bond. N-linked (GlcNAc...) asparagine glycans are attached at residues Asn132 and Asn219. The Ig-like C2-type 2 domain maps to 272–375 (PSTTILASSN…TTVATTVEFS (104 aa)). Cys293 and Cys357 are oxidised to a cystine.

As to quaternary structure, forms a complex composed of PDGFRL, TNK2 and GRB2.

It is found in the secreted. This chain is Platelet-derived growth factor receptor-like protein (PDGFRL), found in Macaca fascicularis (Crab-eating macaque).